The sequence spans 58 residues: Small ribosomal subunit protein bS21 (58 aa).

Positions 35-58 (REHYESPSVRRKKKSEAARKRRYK) are disordered. Residues 43 to 58 (VRRKKKSEAARKRRYK) show a composition bias toward basic residues.

Belongs to the bacterial ribosomal protein bS21 family.

The sequence is that of Small ribosomal subunit protein bS21 from Acetivibrio thermocellus (strain ATCC 27405 / DSM 1237 / JCM 9322 / NBRC 103400 / NCIMB 10682 / NRRL B-4536 / VPI 7372) (Clostridium thermocellum).